The sequence spans 243 residues: Venom protease (243 aa).

The Peptidase S1 domain maps to 1 to 243 (VVGGKPAKLG…DSFILPALKK (243 aa)). C34 and C50 are oxidised to a cystine. Catalysis depends on charge relay system residues H49 and D97. Intrachain disulfides connect C165–C178 and C189–C217. S193 serves as the catalytic Charge relay system.

This sequence belongs to the peptidase S1 family. As to expression, expressed by the venom duct.

It localises to the secreted. The chain is Venom protease from Bombus pensylvanicus (American bumblebee).